The following is a 69-amino-acid chain: Putative F-box protein At2g33705 (69 aa).

The region spanning 14–59 is the F-box domain; that stretch reads GVNLEQIPYDLVLEILLKLSAKSIARFRCVSKLWDSTFRSRYFTEL.

The sequence is that of Putative F-box protein At2g33705 from Arabidopsis thaliana (Mouse-ear cress).